Here is a 111-residue protein sequence, read N- to C-terminus: Protein E7 (111 aa).

The E7 terminal domain stretch occupies residues 1–44 (MHGERPTLGDIVLDLQPEPVSLSCNEQLDSSDSEDDHEQDQLDS). The LXCXE motif; interaction with host RB1 and TMEM173/STING motif lies at 22 to 26 (LSCNE). The interval 24 to 55 (CNEQLDSSDSEDDHEQDQLDSSHNRQREQPTQ) is disordered. A compositionally biased stretch (acidic residues) spans 29–38 (DSSDSEDDHE). Basic and acidic residues predominate over residues 39–51 (QDQLDSSHNRQRE). A zinc finger lies at 71–107 (CVFCHCLVRLVVHCTATDIRQVHQLLMGTLNIVCPNC). Positions 89 to 97 (IRQVHQLLM) match the Nuclear export signal motif.

Belongs to the papillomaviridae E7 protein family. As to quaternary structure, homodimer. Homooligomer. Interacts with host RB1; this interaction induces dissociation of RB1-E2F1 complex thereby disrupting RB1 activity. Interacts with host EP300; this interaction represses EP300 transcriptional activity. Interacts with protein E2; this interaction inhibits E7 oncogenic activity. Interacts with host TMEM173/STING; this interaction impairs the ability of TMEM173/STING to sense cytosolic DNA and promote the production of type I interferon (IFN-alpha and IFN-beta). Post-translationally, highly phosphorylated.

It localises to the host cytoplasm. It is found in the host nucleus. In terms of biological role, plays a role in viral genome replication by driving entry of quiescent cells into the cell cycle. Stimulation of progression from G1 to S phase allows the virus to efficiently use the cellular DNA replicating machinery to achieve viral genome replication. E7 protein has both transforming and trans-activating activities. Induces the disassembly of the E2F1 transcription factor from RB1, with subsequent transcriptional activation of E2F1-regulated S-phase genes. Interferes with host histone deacetylation mediated by HDAC1 and HDAC2, leading to transcription activation. Also plays a role in the inhibition of both antiviral and antiproliferative functions of host interferon alpha. Interaction with host TMEM173/STING impairs the ability of TMEM173/STING to sense cytosolic DNA and promote the production of type I interferon (IFN-alpha and IFN-beta). This chain is Protein E7, found in Human papillomavirus 7.